The sequence spans 334 residues: MAVDITLLFRASVKTVKTRNKALGVAVGGGADGSRDELFRRSPRPKGDFSSRAREVISHIGKLRDFLLEHRKEYINAYSHTMSDYGRMTDTERDQIDQDAQIFIRTCSEAIHQLRTEAHKEIHSQQVKEHRTAVLDFVDDYLKRVCKLYSEQRAIRVKRVVDKKRLSKLEPEPHTKRKDSTSEKAPQNASQDSEGKPAAEELPEKPLAESQPELGTWGDGKGEDELSPEEIQMFEQENQRLIGEMNSLFDEVRQIEGKVVEISRLQEIFTEKVLQQETEIDSIHQLVVGATENIKEGNEDIREAIKNNAGFRVWILFFLVMCSFSLLFLDWYDS.

Residues 1–308 (MAVDITLLFR…EDIREAIKNN (308 aa)) are Cytoplasmic-facing. Disordered regions lie at residues 29–50 (GGADGSRDELFRRSPRPKGDFS) and 166–225 (LSKL…GEDE). 2 stretches are compositionally biased toward basic and acidic residues: residues 33-50 (GSRDELFRRSPRPKGDFS) and 166-182 (LSKLEPEPHTKRKDSTS). Positions 183–192 (EKAPQNASQD) are enriched in polar residues. Residues 193–207 (SEGKPAAEELPEKPL) show a composition bias toward basic and acidic residues. One can recognise a t-SNARE coiled-coil homology domain in the interval 242-304 (IGEMNSLFDE…KEGNEDIREA (63 aa)). Residues 309–329 (AGFRVWILFFLVMCSFSLLFL) traverse the membrane as a helical; Anchor for type IV membrane protein segment. Residues 330–334 (DWYDS) are Lumenal-facing.

This sequence belongs to the syntaxin family. Component of a SNARE complex consisting of STX18, USE1L, BNIP1/SEC20L, and SEC22B. RINT1/TIP20L and ZW10 are associated with the complex through interaction with BNIP1/SEC20L. Interacts directly with USE1L and BNIP1/SEC20L.

Its subcellular location is the endoplasmic reticulum membrane. It is found in the golgi apparatus membrane. In terms of biological role, syntaxin that may be involved in targeting and fusion of Golgi-derived retrograde transport vesicles with the ER. The sequence is that of Syntaxin-18 (Stx18) from Mus musculus (Mouse).